The sequence spans 441 residues: Probable carboxypeptidase NFIA_052450 (441 aa).

An N-terminal signal peptide occupies residues 1 to 16 (MKPLSSLLLSAALSAA). N-linked (GlcNAc...) asparagine glycosylation is found at N88 and N150. D166 contributes to the Zn(2+) binding site. Catalysis depends on E198, which acts as the Proton acceptor. Residue E199 coordinates Zn(2+). 2 N-linked (GlcNAc...) asparagine glycosylation sites follow: N354 and N373.

Belongs to the peptidase M20A family. The cofactor is Zn(2+).

It localises to the secreted. This Neosartorya fischeri (strain ATCC 1020 / DSM 3700 / CBS 544.65 / FGSC A1164 / JCM 1740 / NRRL 181 / WB 181) (Aspergillus fischerianus) protein is Probable carboxypeptidase NFIA_052450.